The following is a 23-amino-acid chain: U1-poneritoxin-Da3b (23 aa).

It belongs to the non-disulfide-bridged peptide (NDBP) superfamily. Medium-length antimicrobial peptide (group 3) family. Ponericin-W subfamily. In terms of tissue distribution, expressed by the venom gland.

The protein localises to the secreted. Its subcellular location is the target cell membrane. Its function is as follows. May have antimicrobial properties, like most ant linear peptides. May act by disrupting the integrity of the bacterial cell membrane. The chain is U1-poneritoxin-Da3b from Dinoponera australis (Giant neotropical hunting ant).